Here is a 161-residue protein sequence, read N- to C-terminus: 2-C-methyl-D-erythritol 2,4-cyclodiphosphate synthase (161 aa).

Residues aspartate 14 and histidine 16 each contribute to the a divalent metal cation site. 4-CDP-2-C-methyl-D-erythritol 2-phosphate contacts are provided by residues 14–16 (DVH) and 40–41 (HS). A divalent metal cation is bound at residue histidine 48. Residues 62-64 (DLG), phenylalanine 142, and arginine 145 contribute to the 4-CDP-2-C-methyl-D-erythritol 2-phosphate site.

It belongs to the IspF family. Homotrimer. Requires a divalent metal cation as cofactor.

The enzyme catalyses 4-CDP-2-C-methyl-D-erythritol 2-phosphate = 2-C-methyl-D-erythritol 2,4-cyclic diphosphate + CMP. The protein operates within isoprenoid biosynthesis; isopentenyl diphosphate biosynthesis via DXP pathway; isopentenyl diphosphate from 1-deoxy-D-xylulose 5-phosphate: step 4/6. Involved in the biosynthesis of isopentenyl diphosphate (IPP) and dimethylallyl diphosphate (DMAPP), two major building blocks of isoprenoid compounds. Catalyzes the conversion of 4-diphosphocytidyl-2-C-methyl-D-erythritol 2-phosphate (CDP-ME2P) to 2-C-methyl-D-erythritol 2,4-cyclodiphosphate (ME-CPP) with a corresponding release of cytidine 5-monophosphate (CMP). In Acidothermus cellulolyticus (strain ATCC 43068 / DSM 8971 / 11B), this protein is 2-C-methyl-D-erythritol 2,4-cyclodiphosphate synthase.